The primary structure comprises 66 residues: Large ribosomal subunit protein bL35 (66 aa).

Positions 1 to 16 (MPKQKTHRASAKRFKR) are enriched in basic residues. The tract at residues 1 to 21 (MPKQKTHRASAKRFKRTGNGG) is disordered.

Belongs to the bacterial ribosomal protein bL35 family.

The chain is Large ribosomal subunit protein bL35 from Lactococcus lactis subsp. cremoris (strain MG1363).